Here is a 121-residue protein sequence, read N- to C-terminus: LENSTSLLSDPPVAAAVVSHFNDCPDSHTQFCFHGTCRFLVQEDRPACVCHSGYVGARCEHADLLAVVAASQKKQAITALVVVSIVALAVLIITCVLIHCCQVRKHCEWCRALICRHEKPS.

Residue Leu-1 is a signal peptide. Positions 2–16 are cleaved as a propeptide — removed in mature form; it reads ENSTSLLSDPPVAAA. At 2–75 the chain is on the extracellular side; that stretch reads ENSTSLLSDP…AVVAASQKKQ (74 aa). An N-linked (GlcNAc...) asparagine glycan is attached at Asn-3. The 41-residue stretch at 20–60 folds into the EGF-like domain; the sequence is HFNDCPDSHTQFCFHGTCRFLVQEDRPACVCHSGYVGARCE. Intrachain disulfides connect Cys-24–Cys-37, Cys-32–Cys-48, and Cys-50–Cys-59. A propeptide spans 67-121 (removed in mature form); that stretch reads VVAASQKKQAITALVVVSIVALAVLIITCVLIHCCQVRKHCEWCRALICRHEKPS. The helical transmembrane segment at 76–101 threads the bilayer; sequence AITALVVVSIVALAVLIITCVLIHCC.

In terms of assembly, interacts with the PDZ domains of MAGI3, SDCBP and SNTA1. The interaction with SDCBP, is required for the targeting to the cell surface. In the endoplasmic reticulum, in its immature form (i.e. with a prosegment and lacking full N-glycosylation), interacts with CNIH. In the Golgi apparatus, may form a complex with CNIH and GORASP2. Interacts (via cytoplasmic C-terminal domain) with NKD2. Hypothalamus.

The protein localises to the secreted. Its subcellular location is the extracellular space. The protein resides in the cell membrane. Functionally, TGF alpha is a mitogenic polypeptide that is able to bind to the EGF receptor/EGFR and to act synergistically with TGF beta to promote anchorage-independent cell proliferation in soft agar. This chain is Protransforming growth factor alpha (TGFA), found in Macaca mulatta (Rhesus macaque).